Reading from the N-terminus, the 136-residue chain is ATP synthase epsilon chain (136 aa).

Belongs to the ATPase epsilon chain family. In terms of assembly, F-type ATPases have 2 components, CF(1) - the catalytic core - and CF(0) - the membrane proton channel. CF(1) has five subunits: alpha(3), beta(3), gamma(1), delta(1), epsilon(1). CF(0) has three main subunits: a, b and c.

It is found in the cell inner membrane. In terms of biological role, produces ATP from ADP in the presence of a proton gradient across the membrane. The sequence is that of ATP synthase epsilon chain from Agrobacterium fabrum (strain C58 / ATCC 33970) (Agrobacterium tumefaciens (strain C58)).